The chain runs to 4001 residues: Ankyrin repeat and KH domain-containing protein mask (4001 aa).

Over residues 1–14 the composition is skewed to basic and acidic residues; the sequence is MNNDAKNHESDDLN. Disordered regions lie at residues 1–61, 91–174, and 391–494; these read MNND…NRQL, KNEP…GGGS, and DTDT…FLLD. A compositionally biased stretch (polar residues) spans 15 to 30; it reads VRSTAYFNQQTTTNQP. Positions 38–61 are enriched in low complexity; the sequence is NNTGSGSGSNNNNNNTNQNPNRQL. Residues 94 to 117 show a composition bias toward polar residues; the sequence is PLTTTESSGVLTNTPLPSNSRLKV. Positions 118 to 159 are enriched in low complexity; that stretch reads NNNNNTNNTAKMSGTSSSQSSATPTPPTASSSTTTTTTTNIS. The segment covering 160–174 has biased composition (gly residues); sequence TGGGGSGSSGGGGGS. Acidic residues-rich tracts occupy residues 408–425 and 434–486; these read SESE…ESDP and VRED…EDAP. A Phosphoserine modification is found at S501. ANK repeat units follow at residues 546-575, 584-614, 618-647, 651-680, 684-713, 718-747, 751-780, 784-813, 817-846, 851-880, 881-910, 914-943, 947-976, 981-1011, and 1014-1043; these read SGFS…NVNL, DGES…QVED, KDST…DVNA, TGNT…NVEE, NGHT…GINT, FKES…DQEH, EMHT…QVNM, SFES…NIEE, EGYT…NINA, TQET…NLEL, GAST…NVHA, TGDT…ELEH, GGRT…NVNK, NDHT…PFHK, and DNST…ISPT. Disordered regions lie at residues 1046–1067 and 1306–1376; these read AASA…NQMR and QPGE…PTAL. Polar residues predominate over residues 1367-1376; it reads DNNQPVPTAL. S1389 and S1588 each carry phosphoserine. Disordered regions lie at residues 1583–1612, 1646–1669, 1682–1779, 1852–1872, 2084–2108, and 2225–2256; these read GDQP…RLGS, SDLE…ENTL, EDGI…SLPL, VVHQ…DGSA, MAQH…QQLH, and TPAP…KERR. 3 stretches are compositionally biased toward acidic residues: residues 1646–1657, 1685–1704, and 1716–1759; these read SDLESECEDDAE, IIVE…EEQD, and DDED…EPDS. Positions 1760-1776 are enriched in low complexity; that stretch reads DQGTGNNNNNSKSGASS. Residues 2084–2093 are compositionally biased toward low complexity; sequence MAQHQAQQQQ. Over residues 2228–2237 the composition is skewed to polar residues; sequence PSSGVSSTKS. ANK repeat units follow at residues 2312–2341, 2345–2374, 2379–2408, 2412–2441, 2447–2476, 2481–2510, 2514–2543, 2549–2578, 2582–2611, and 2615–2644; these read NHDT…NIEH, KGFT…ELEA, TKDT…NKEH, SDYT…EINS, LGIS…DINA, NRNT…NVEH, TGLT…DVNA, SRDT…SVEV, KGNS…DIDS, and RRVS…QFPS. Residues 2674–2732 are a coiled coil; the sequence is AKEAQAVKANKNASILLEELDLERTREESRKAAAARRRERKKKKKMEKKEEKRRQQQGN. S2687 carries the phosphoserine modification. T2698 bears the Phosphothreonine mark. Residues 2699–3033 are disordered; sequence REESRKAAAA…TSTTTAASSV (335 aa). Residues 2706–2719 show a composition bias toward basic residues; the sequence is AAARRRERKKKKKM. The span at 2739–2762 shows a compositional bias: acidic residues; sequence MQGDDDDASDKDDDSDKDDEDEEA. S2747 and S2753 each carry phosphoserine. Residues 2793-2810 are compositionally biased toward low complexity; the sequence is SQSAQAAEAAANSVSTNS. Residues 2828 to 2839 are compositionally biased toward polar residues; sequence EPTQPVITSNSV. The segment covering 2868–2886 has biased composition (basic and acidic residues); that stretch reads RQLDVKKEEPALKKKEEKN. The span at 2906–2941 shows a compositional bias: low complexity; the sequence is ALPAKQQPSSSSKLQSSESASNINSSTATNTSSANT. The segment covering 2950–2960 has biased composition (polar residues); the sequence is ASQTASATTLN. Residues 2963–2975 show a composition bias toward basic and acidic residues; sequence KRTEVDGWKEVVR. The span at 2995 to 3004 shows a compositional bias: polar residues; it reads TATSSATSVQ. The span at 3012–3032 shows a compositional bias: low complexity; that stretch reads ANSSSNSSSSLTTSTTTAASS. In terms of domain architecture, KH spans 3036 to 3100; sequence MTCKKVQVPV…DATKQAHMLI (65 aa). 3 stretches are compositionally biased toward low complexity: residues 3156-3178, 3195-3227, and 3244-3257; these read ASTT…ASYS, SGRS…AGSS, and NGVI…SSKS. 4 disordered regions span residues 3156–3329, 3383–3457, 3520–3636, and 3744–3786; these read ASTT…GQGG, KPIA…QTSQ, AVGD…PPTA, and IFPQ…GGAA. Residues 3262–3278 are compositionally biased toward polar residues; sequence QKSSTTLGKSSTVSPGA. The segment covering 3396-3416 has biased composition (low complexity); the sequence is GSPTQVQQQHQTQQQQQQQLP. The span at 3417 to 3427 shows a compositional bias: pro residues; that stretch reads QPAPVPGPQPQ. Residues 3428 to 3457 show a composition bias toward low complexity; it reads QQPLQQQQQQQAPQQQPQQPNQQQQPQTSQ. The span at 3539–3559 shows a compositional bias: polar residues; it reads NILSSPVGSSKASSNHSTSPP. The segment covering 3565–3577 has biased composition (low complexity); that stretch reads QQQQQQQPQSSQQ. S3596 carries the post-translational modification Phosphoserine. Low complexity predominate over residues 3774-3786; that stretch reads PPGTGARQPGGAA. Residues S3820, S3822, and S3825 each carry the phosphoserine modification. Residues 3876 to 3945 form a disordered region; the sequence is KAQPPGLQQP…HNMQAPPNMS (70 aa). The segment covering 3891 to 3910 has biased composition (low complexity); that stretch reads SQQQQQQPLNWLKQQPQQQQ.

In terms of assembly, may interact with Unc-89 (via protein kinase domain 1 or 2). Expressed ubiquitously in eye imaginal disk, slightly higher expression is seen in presumptive photoreceptors. Expressed in indirect flight muscle (IFM) (at protein level).

It is found in the cytoplasm. It localises to the myofibril. The protein resides in the sarcomere. Its subcellular location is the z line. The protein localises to the m line. Its function is as follows. Mediator of receptor tyrosine kinase (RTK) signaling, and may act either downstream of MAPK or transduce signaling through a parallel branch of the RTK pathway. Required for the development and organization of indirect flight muscle sarcomeres by regulating the formation of M line and H zone and the correct assembly of thick and thin filaments in the sarcomere. The sequence is that of Ankyrin repeat and KH domain-containing protein mask from Drosophila melanogaster (Fruit fly).